Reading from the N-terminus, the 636-residue chain is 1,4-alpha-glucan branching enzyme GlgB (636 aa).

D309 functions as the Nucleophile in the catalytic mechanism. E362 acts as the Proton donor in catalysis.

Belongs to the glycosyl hydrolase 13 family. GlgB subfamily. In terms of assembly, monomer.

It catalyses the reaction Transfers a segment of a (1-&gt;4)-alpha-D-glucan chain to a primary hydroxy group in a similar glucan chain.. It participates in glycan biosynthesis; glycogen biosynthesis. Functionally, catalyzes the formation of the alpha-1,6-glucosidic linkages in glycogen by scission of a 1,4-alpha-linked oligosaccharide from growing alpha-1,4-glucan chains and the subsequent attachment of the oligosaccharide to the alpha-1,6 position. This is 1,4-alpha-glucan branching enzyme GlgB from Aromatoleum aromaticum (strain DSM 19018 / LMG 30748 / EbN1) (Azoarcus sp. (strain EbN1)).